We begin with the raw amino-acid sequence, 200 residues long: Probable GTP-binding protein EngB (200 aa).

Residues 22–194 (TLPEVAFVGR…WKEVLRLTLA (173 aa)) enclose the EngB-type G domain. GTP is bound by residues 30-37 (GRSNVGKS), 57-61 (GRTQL), 75-78 (DLPG), 142-145 (TKCD), and 173-175 (FSA). Mg(2+) contacts are provided by serine 37 and threonine 59.

The protein belongs to the TRAFAC class TrmE-Era-EngA-EngB-Septin-like GTPase superfamily. EngB GTPase family. Mg(2+) serves as cofactor.

In terms of biological role, necessary for normal cell division and for the maintenance of normal septation. This chain is Probable GTP-binding protein EngB, found in Pelobacter propionicus (strain DSM 2379 / NBRC 103807 / OttBd1).